The chain runs to 208 residues: Ribonuclease HII (208 aa).

Positions 13 to 202 constitute an RNase H type-2 domain; that stretch reads DLVAGVDEVG…VRQAYEAREA (190 aa). The a divalent metal cation site is built by aspartate 19, glutamate 20, and aspartate 111.

The protein belongs to the RNase HII family. It depends on Mn(2+) as a cofactor. The cofactor is Mg(2+).

It is found in the cytoplasm. It carries out the reaction Endonucleolytic cleavage to 5'-phosphomonoester.. Functionally, endonuclease that specifically degrades the RNA of RNA-DNA hybrids. This Pseudomonas fluorescens (strain ATCC BAA-477 / NRRL B-23932 / Pf-5) protein is Ribonuclease HII.